A 120-amino-acid chain; its full sequence is Large ribosomal subunit protein uL29A (120 aa).

S13 and S50 each carry phosphoserine.

The protein belongs to the universal ribosomal protein uL29 family. Component of the large ribosomal subunit (LSU). Mature yeast ribosomes consist of a small (40S) and a large (60S) subunit. The 40S small subunit contains 1 molecule of ribosomal RNA (18S rRNA) and 33 different proteins (encoded by 57 genes). The large 60S subunit contains 3 rRNA molecules (25S, 5.8S and 5S rRNA) and 46 different proteins (encoded by 81 genes). uL29 is associated with the polypeptide exit tunnel.

It is found in the cytoplasm. Functionally, component of the ribosome, a large ribonucleoprotein complex responsible for the synthesis of proteins in the cell. The small ribosomal subunit (SSU) binds messenger RNAs (mRNAs) and translates the encoded message by selecting cognate aminoacyl-transfer RNA (tRNA) molecules. The large subunit (LSU) contains the ribosomal catalytic site termed the peptidyl transferase center (PTC), which catalyzes the formation of peptide bonds, thereby polymerizing the amino acids delivered by tRNAs into a polypeptide chain. The nascent polypeptides leave the ribosome through a tunnel in the LSU and interact with protein factors that function in enzymatic processing, targeting, and the membrane insertion of nascent chains at the exit of the ribosomal tunnel. This Saccharomyces cerevisiae (strain ATCC 204508 / S288c) (Baker's yeast) protein is Large ribosomal subunit protein uL29A.